Here is a 3763-residue protein sequence, read N- to C-terminus: Colossin-B (3763 aa).

The first 19 residues, 1–19, serve as a signal peptide directing secretion; sequence MKGSIFLLFIFQIFKFSSS. N43, N110, N258, and N284 each carry an N-linked (GlcNAc...) asparagine glycan. The Follistatin-like 1 domain maps to 619–643; sequence DCSTLQCPSGYECKLDKNSKTRGCI. N-linked (GlcNAc...) asparagine glycans are attached at residues N652 and N672. Follistatin-like domains follow at residues 701-724 and 729-752; these read HCRN…PRCF and PCEF…AKCF. The segment at 792 to 832 is disordered; that stretch reads PPIFYETPSPTSAPPTETPSPTDTPTDKPTIPPTPTPTPSK. Residues 810–820 are compositionally biased toward low complexity; it reads PSPTDTPTDKP. N-linked (GlcNAc...) asparagine glycosylation is found at N845 and N991. Disordered regions lie at residues 1033-1068 and 1095-1124; these read LGSS…SESS and PQPT…PTST. Over residues 1036-1051 the composition is skewed to gly residues; sequence SGSGSSGNSGSSGSGG. Low complexity-rich tracts occupy residues 1052 to 1068 and 1099 to 1124; these read SSND…SESS and PSTD…PTST. A glycan (N-linked (GlcNAc...) asparagine) is linked at N1054. One can recognise a CNA-B 1 domain in the interval 1159–1227; it reads VSGVEITLIQ…LLNKYPIDTS (69 aa). N-linked (GlcNAc...) asparagine glycans are attached at residues N1229 and N1247. Positions 1304 to 1373 constitute a CNA-B 2 domain; that stretch reads IKGIQVTLKD…VYTMDTFQLS (70 aa). N1381 carries N-linked (GlcNAc...) asparagine glycosylation. 3 CNA-B domains span residues 1437–1515, 1582–1648, and 1731–1809; these read LPGV…IDTK, VPGI…LTLD, and VGGV…FTLS. 2 N-linked (GlcNAc...) asparagine glycosylation sites follow: N1769 and N1815. Residues 1883–1955 are disordered; that stretch reads GSTVDGGTSV…SEQPPEDSME (73 aa). Residues 1898-1948 show a composition bias toward low complexity; sequence STSTTTVSSSPSSSSDIGSSSDISSEVSSSLSSSPSSSEQPSEQSSSSSEQ. In terms of domain architecture, CNA-B 6 spans 2015 to 2083; sequence VPDVTVTLVN…DPLSGKIDFN (69 aa). N-linked (GlcNAc...) asparagine glycosylation is found at N2128, N2145, N2243, N2294, N2351, N2378, N2453, N2493, N2496, N2516, N2572, N2601, N2624, N2668, N2698, N2714, N2781, N2787, N2800, N2838, and N2858. In terms of domain architecture, CNA-B 7 spans 2143–2197; that stretch reads FPNITVRLFDQNLQPVLDNFNIQVEPTVTNALGQYYFDNLHSGSYIVKFEVPTRY. The region spanning 2292-2345 is the CNA-B 8 domain; the sequence is VPNVTVEIFNPTGQQVYNINELLIGSTTTDSNGYYLFDEIQPGSYIIKFSNIPN. The CNA-B 9 domain maps to 2453–2477; the sequence is NTTTTDQNGLYYFDNLSPGLYKLLF. The region spanning 2713–2766 is the CNA-B 10 domain; it reads VNGTIVTLLDINGNTMVDADSYPINSYTTGPDGYYKFDDFSFGKYIITFSGVPD. The CNA-B 11 domain occupies 2984–3061; sequence LGGVVVTLYN…DSNASPVDGY (78 aa). N-linked (GlcNAc...) asparagine glycosylation is found at N3083, N3130, N3372, N3390, N3459, N3466, N3557, N3666, N3676, and N3681. The CNA-B 12 domain maps to 3128–3201; that stretch reads YPNITVSIYT…TKTGVNLGII (74 aa). In terms of domain architecture, CNA-B 13 spans 3664-3733; that stretch reads MANITVQLFS…NDKRDLEKIN (70 aa).

It belongs to the serine-aspartate repeat-containing protein (SDr) family.

It is found in the secreted. The protein is Colossin-B (colB) of Dictyostelium discoideum (Social amoeba).